The chain runs to 324 residues: Glyoxylate/hydroxypyruvate reductase B (324 aa).

Active-site residues include arginine 237 and glutamate 266. Histidine 285 serves as the catalytic Proton donor.

It belongs to the D-isomer specific 2-hydroxyacid dehydrogenase family. GhrB subfamily. In terms of assembly, homodimer.

Its subcellular location is the cytoplasm. The enzyme catalyses glycolate + NADP(+) = glyoxylate + NADPH + H(+). The catalysed reaction is (R)-glycerate + NAD(+) = 3-hydroxypyruvate + NADH + H(+). It catalyses the reaction (R)-glycerate + NADP(+) = 3-hydroxypyruvate + NADPH + H(+). Its function is as follows. Catalyzes the NADPH-dependent reduction of glyoxylate and hydroxypyruvate into glycolate and glycerate, respectively. The polypeptide is Glyoxylate/hydroxypyruvate reductase B (Salmonella paratyphi A (strain ATCC 9150 / SARB42)).